The chain runs to 385 residues: UPF0764 protein C16orf89 homolog (385 aa).

Residues 1–20 form the signal peptide; it reads MARLGLLLLLLLALPPHFSS. A disordered region spans residues 344–385; sequence AHPEYYPNHGDPYSSSQSPASNYQDGAAGPDVQRTGRPLSVS. The span at 356-367 shows a compositional bias: polar residues; it reads YSSSQSPASNYQ.

Belongs to the UPF0764 family. Homodimer. In terms of processing, glycosylated. As to expression, predominantly expressed in thyroid tissue.

It localises to the secreted. This Mus musculus (Mouse) protein is UPF0764 protein C16orf89 homolog.